The following is a 285-amino-acid chain: Pantothenate synthetase (285 aa).

30–37 (MGNLHDGH) serves as a coordination point for ATP. His37 acts as the Proton donor in catalysis. Gln61 contacts (R)-pantoate. Gln61 lines the beta-alanine pocket. 149 to 152 (GEKD) is an ATP binding site. Residue Gln155 coordinates (R)-pantoate. Residues Ile178 and 186 to 189 (FSSR) contribute to the ATP site.

It belongs to the pantothenate synthetase family. Homodimer.

The protein localises to the cytoplasm. The enzyme catalyses (R)-pantoate + beta-alanine + ATP = (R)-pantothenate + AMP + diphosphate + H(+). Its pathway is cofactor biosynthesis; (R)-pantothenate biosynthesis; (R)-pantothenate from (R)-pantoate and beta-alanine: step 1/1. Functionally, catalyzes the condensation of pantoate with beta-alanine in an ATP-dependent reaction via a pantoyl-adenylate intermediate. The sequence is that of Pantothenate synthetase from Buchnera aphidicola subsp. Schizaphis graminum (strain Sg).